We begin with the raw amino-acid sequence, 274 residues long: ATP synthase subunit a (274 aa).

The next 5 helical transmembrane spans lie at 43-63 (TLNIDSLFFSVVLGLAFLLVF), 103-123 (VIAPLALTVFVWVLLMNMMDL), 149-169 (DVSITLSMALGVFILIIFYSI), 223-243 (LIFILIAGLLPWWSQWMLSVP), and 245-265 (AIFHILIITLQAFIFMVLTIV).

Belongs to the ATPase A chain family. In terms of assembly, F-type ATPases have 2 components, CF(1) - the catalytic core - and CF(0) - the membrane proton channel. CF(1) has five subunits: alpha(3), beta(3), gamma(1), delta(1), epsilon(1). CF(0) has three main subunits: a(1), b(2) and c(9-12). The alpha and beta chains form an alternating ring which encloses part of the gamma chain. CF(1) is attached to CF(0) by a central stalk formed by the gamma and epsilon chains, while a peripheral stalk is formed by the delta and b chains.

It is found in the cell inner membrane. Functionally, key component of the proton channel; it plays a direct role in the translocation of protons across the membrane. This Yersinia pestis bv. Antiqua (strain Antiqua) protein is ATP synthase subunit a.